A 456-amino-acid chain; its full sequence is Na(+)/H(+) antiporter NhaA 3 (456 aa).

The next 11 helical transmembrane spans lie at 32–52 (IEATSGAVLLLATVVALTLSN), 87–107 (GLMTLFFFIVALEIKREVVLG), 114–134 (MVALSVVAAAGGMLVPMGLYL), 145–165 (GWGVVMPTDTAFVIGCLALLG), 174–194 (VFLLSLAVVDDLAAILVVAVG), 202–222 (TALALGAVGLVIIRGMALLGV), 233–253 (AIIWLAVNASGIHATIVGVIL), 318–338 (WVAFGVMPLFALANAGVPITI), 347–367 (LAVMAGFVLGKPIGVTAFAWL), 382–402 (WGGLVGGALLTGIGFTMALFI), and 417–437 (LGILAASVVSSVAGLTLLCAL).

The protein belongs to the NhaA Na(+)/H(+) (TC 2.A.33) antiporter family.

It localises to the cell inner membrane. It catalyses the reaction Na(+)(in) + 2 H(+)(out) = Na(+)(out) + 2 H(+)(in). Its function is as follows. Na(+)/H(+) antiporter that extrudes sodium in exchange for external protons. In Acidiphilium cryptum (strain JF-5), this protein is Na(+)/H(+) antiporter NhaA 3.